A 432-amino-acid polypeptide reads, in one-letter code: Adenylosuccinate synthetase 2 (432 aa).

Residues 13–19 (GDEGKGK) and 41–43 (GHT) contribute to the GTP site. Residue Asp14 is the Proton acceptor of the active site. The Mg(2+) site is built by Asp14 and Gly41. Residues 14 to 17 (DEGK), 39 to 42 (NAGH), Thr130, Arg144, Gln225, Thr240, and Arg304 contribute to the IMP site. His42 functions as the Proton donor in the catalytic mechanism. Position 300-306 (300-306 (ATTGRSR)) interacts with substrate. Residues Arg306, 332–334 (KLD), and 415–417 (STG) contribute to the GTP site.

It belongs to the adenylosuccinate synthetase family. As to quaternary structure, homodimer. Mg(2+) is required as a cofactor.

The protein localises to the cytoplasm. The enzyme catalyses IMP + L-aspartate + GTP = N(6)-(1,2-dicarboxyethyl)-AMP + GDP + phosphate + 2 H(+). It participates in purine metabolism; AMP biosynthesis via de novo pathway; AMP from IMP: step 1/2. Functionally, plays an important role in the de novo pathway of purine nucleotide biosynthesis. Catalyzes the first committed step in the biosynthesis of AMP from IMP. The polypeptide is Adenylosuccinate synthetase 2 (Photorhabdus laumondii subsp. laumondii (strain DSM 15139 / CIP 105565 / TT01) (Photorhabdus luminescens subsp. laumondii)).